Consider the following 191-residue polypeptide: Calcium-activated potassium channel subunit beta-1 (191 aa).

The Cytoplasmic portion of the chain corresponds to 1–15; the sequence is MGKKLVMAQKRGETR. The helical transmembrane segment at 16 to 36 threads the bilayer; the sequence is ALCLGVAMVMCAVIAYYILGT. The Extracellular portion of the chain corresponds to 37–157; it reads TMLPLYQKSV…YRRLYGPQTL (121 aa). 2 N-linked (GlcNAc...) asparagine glycosylation sites follow: N80 and N142. The helical transmembrane segment at 158–178 threads the bilayer; the sequence is LFSLFWPTFLLTGGLLIIAMV. Residues 179–191 are Cytoplasmic-facing; sequence KINQSLSILAAQR.

The protein belongs to the KCNMB (TC 8.A.14.1) family. KCNMB1 subfamily. In terms of assembly, interacts with KCNMA1 tetramer. There are probably 4 molecules of KCMNB1 per KCNMA1 tetramer. Post-translationally, N-glycosylated.

Its subcellular location is the membrane. Its function is as follows. Regulatory subunit of the calcium activated potassium KCNMA1 (maxiK) channel. Modulates the calcium sensitivity and gating kinetics of KCNMA1, thereby contributing to KCNMA1 channel diversity. Increases the apparent Ca(2+)/voltage sensitivity of the KCNMA1 channel. It also modifies KCNMA1 channel kinetics and alters its pharmacological properties. It slows down the activation and the deactivation kinetics of the channel. Acts as a negative regulator of smooth muscle contraction by enhancing the calcium sensitivity to KCNMA1. Its presence is also a requirement for internal binding of the KCNMA1 channel opener dehydrosoyasaponin I (DHS-1) triterpene glycoside and for external binding of the agonist hormone 17-beta-estradiol (E2). Increases the binding activity of charybdotoxin (CTX) toxin to KCNMA1 peptide blocker by increasing the CTX association rate and decreasing the dissociation rate. The protein is Calcium-activated potassium channel subunit beta-1 (KCNMB1) of Canis lupus familiaris (Dog).